We begin with the raw amino-acid sequence, 81 residues long: UPF0180 protein ABC2430 (81 aa).

It belongs to the UPF0180 family.

The polypeptide is UPF0180 protein ABC2430 (Shouchella clausii (strain KSM-K16) (Alkalihalobacillus clausii)).